Here is a 415-residue protein sequence, read N- to C-terminus: Casein kinase 1-like protein 3 (415 aa).

The region spanning 9-277 is the Protein kinase domain; it reads YKLGRKIGGG…FLKRLFRDLF (269 aa). ATP-binding positions include 15 to 23 and Lys38; that span reads IGGGSFGEI. The active-site Proton acceptor is the Asp128. 2 stretches are compositionally biased toward polar residues: residues 303–314 and 373–415; these read NQSQAVPGSSNP and NMPS…SPEK. 2 disordered regions span residues 303-330 and 344-415; these read NQSQ…GPNI and NAIG…SPEK.

It belongs to the protein kinase superfamily. CK1 Ser/Thr protein kinase family. Casein kinase I subfamily. Post-translationally, slightly autophosphorylated. Expressed in seedlings, stems, leaves and flowers.

The protein localises to the cytoplasm. Its subcellular location is the nucleus. It carries out the reaction L-seryl-[protein] + ATP = O-phospho-L-seryl-[protein] + ADP + H(+). The catalysed reaction is L-threonyl-[protein] + ATP = O-phospho-L-threonyl-[protein] + ADP + H(+). Functionally, protein kinase involved in blue light responses (e.g. hypocotyl elongation and flowering) by phosphorylating CRY2 to reduce its stability. This is Casein kinase 1-like protein 3 from Arabidopsis thaliana (Mouse-ear cress).